Here is a 301-residue protein sequence, read N- to C-terminus: GTP cyclohydrolase FolE2 (301 aa).

It belongs to the GTP cyclohydrolase IV family.

It catalyses the reaction GTP + H2O = 7,8-dihydroneopterin 3'-triphosphate + formate + H(+). It functions in the pathway cofactor biosynthesis; 7,8-dihydroneopterin triphosphate biosynthesis; 7,8-dihydroneopterin triphosphate from GTP: step 1/1. Its function is as follows. Converts GTP to 7,8-dihydroneopterin triphosphate. This is GTP cyclohydrolase FolE2 from Exiguobacterium sibiricum (strain DSM 17290 / CCUG 55495 / CIP 109462 / JCM 13490 / 255-15).